Consider the following 236-residue polypeptide: Phosphoribosylaminoimidazole-succinocarboxamide synthase (236 aa).

Belongs to the SAICAR synthetase family.

The enzyme catalyses 5-amino-1-(5-phospho-D-ribosyl)imidazole-4-carboxylate + L-aspartate + ATP = (2S)-2-[5-amino-1-(5-phospho-beta-D-ribosyl)imidazole-4-carboxamido]succinate + ADP + phosphate + 2 H(+). Its pathway is purine metabolism; IMP biosynthesis via de novo pathway; 5-amino-1-(5-phospho-D-ribosyl)imidazole-4-carboxamide from 5-amino-1-(5-phospho-D-ribosyl)imidazole-4-carboxylate: step 1/2. The chain is Phosphoribosylaminoimidazole-succinocarboxamide synthase from Campylobacter concisus (strain 13826).